Consider the following 150-residue polypeptide: uncharacterized protein (150 aa).

The 75-residue stretch at 19 to 93 (GAQDYVLVDV…SSKRLALRES (75 aa)) folds into the Rhodanese domain.

This is an uncharacterized protein from Synechococcus elongatus.